The following is a 548-amino-acid chain: Esterase-5A (548 aa).

Positions 1 to 21 are cleaved as a signal peptide; sequence MHLVRWLICLIQLWVQLGAAG. An intrachain disulfide couples Cys-87 to Cys-106. N-linked (GlcNAc...) asparagine glycosylation is found at Asn-95 and Asn-116. Ser-210 acts as the Acyl-ester intermediate in catalysis. Cysteines 262 and 274 form a disulfide. N-linked (GlcNAc...) asparagine glycosylation occurs at Asn-479. Residues Cys-518 and Cys-539 are joined by a disulfide bond.

The protein belongs to the type-B carboxylesterase/lipase family.

The protein localises to the secreted. It carries out the reaction a carboxylic ester + H2O = an alcohol + a carboxylate + H(+). In Drosophila pseudoobscura pseudoobscura (Fruit fly), this protein is Esterase-5A (Est-5A).